The chain runs to 706 residues: Elongation factor G (706 aa).

The 290-residue stretch at Ser-8–Asn-297 folds into the tr-type G domain. GTP is bound by residues Ala-17–Thr-24, Asp-95–His-99, and Asn-149–Asp-152.

The protein belongs to the TRAFAC class translation factor GTPase superfamily. Classic translation factor GTPase family. EF-G/EF-2 subfamily.

The protein localises to the cytoplasm. Its function is as follows. Catalyzes the GTP-dependent ribosomal translocation step during translation elongation. During this step, the ribosome changes from the pre-translocational (PRE) to the post-translocational (POST) state as the newly formed A-site-bound peptidyl-tRNA and P-site-bound deacylated tRNA move to the P and E sites, respectively. Catalyzes the coordinated movement of the two tRNA molecules, the mRNA and conformational changes in the ribosome. The protein is Elongation factor G of Orientia tsutsugamushi (strain Boryong) (Rickettsia tsutsugamushi).